The primary structure comprises 460 residues: 7-cyano-7-deazaguanine synthase 2 (460 aa).

The active-site For GATase activity is the Cys-2. The Glutamine amidotransferase type-2 domain maps to 2–225 (CSVTGVLIIK…PYSIVEVNDN (224 aa)). 245-255 (ASGGLDSTVAA) lines the ATP pocket. Zn(2+) is bound by residues Cys-426, Cys-434, Cys-437, and Cys-440.

The protein belongs to the QueC family. Zn(2+) serves as cofactor.

It catalyses the reaction 7-carboxy-7-deazaguanine + NH4(+) + ATP = 7-cyano-7-deazaguanine + ADP + phosphate + H2O + H(+). The protein operates within purine metabolism; 7-cyano-7-deazaguanine biosynthesis. Functionally, catalyzes the ATP-dependent conversion of 7-carboxy-7-deazaguanine (CDG) to 7-cyano-7-deazaguanine (preQ(0)). In Sulfurisphaera tokodaii (strain DSM 16993 / JCM 10545 / NBRC 100140 / 7) (Sulfolobus tokodaii), this protein is 7-cyano-7-deazaguanine synthase 2 (queC2).